The sequence spans 264 residues: Phosphonoacetaldehyde hydrolase (264 aa).

Catalysis depends on Asp-9, which acts as the Nucleophile. The Mg(2+) site is built by Asp-9 and Ala-11. The active-site Schiff-base intermediate with substrate is Lys-50. Residue Asp-183 participates in Mg(2+) binding.

The protein belongs to the HAD-like hydrolase superfamily. PhnX family. In terms of assembly, homodimer. Mg(2+) serves as cofactor.

The enzyme catalyses phosphonoacetaldehyde + H2O = acetaldehyde + phosphate + H(+). Functionally, involved in phosphonate degradation. This is Phosphonoacetaldehyde hydrolase from Bacillus mycoides (strain KBAB4) (Bacillus weihenstephanensis).